We begin with the raw amino-acid sequence, 406 residues long: Zinc finger CCCH domain-containing protein 15 homolog (406 aa).

Residues 1-11 show a composition bias toward low complexity; the sequence is MPPKKAPAGPS. Residues 1-70 form a disordered region; that stretch reads MPPKKAPAGP…DKKKDEKEKK (70 aa). Positions 12–28 are enriched in basic and acidic residues; sequence KKTEQKKKEKVIEDKTF. Positions 38–50 are enriched in low complexity; it reads QQKFIQQVQKQVQ. Residues 56-70 show a composition bias toward basic and acidic residues; the sequence is PRQDGDKKKDEKEKK. A coiled-coil region spans residues 57–82; the sequence is RQDGDKKKDEKEKKLADLREMASIFK. 2 C3H1-type zinc fingers span residues 94–121 and 166–203; these read DPKS…HDLS and PTTE…HALP. The tract at residues 336 to 382 is disordered; it reads VDGSGTIASSTRLLDQATEAAKTAAAEDGAASDDENPSSSAPANDAA. 2 stretches are compositionally biased toward low complexity: residues 352–364 and 372–382; these read ATEA…AEDG and PSSSAPANDAA.

The protein belongs to the ZC3H15/TMA46 family.

The chain is Zinc finger CCCH domain-containing protein 15 homolog from Drosophila pseudoobscura pseudoobscura (Fruit fly).